Here is a 78-residue protein sequence, read N- to C-terminus: Large ribosomal subunit protein bL28 (78 aa).

It belongs to the bacterial ribosomal protein bL28 family.

In Edwardsiella ictaluri (strain 93-146), this protein is Large ribosomal subunit protein bL28.